The primary structure comprises 292 residues: tRNA (adenine(9)-N1)-methyltransferase (292 aa).

Positions 72–253 constitute an SAM-dependent MTase TRM10-type domain; the sequence is TFRKGGKKVS…ISLQSKSDKI (182 aa).

The protein belongs to the class IV-like SAM-binding methyltransferase superfamily. TRM10 family.

The protein resides in the cytoplasm. The enzyme catalyses adenosine(9) in tRNA + S-adenosyl-L-methionine = N(1)-methyladenosine(9) in tRNA + S-adenosyl-L-homocysteine + H(+). Its function is as follows. Catalyzes the S-adenosyl-L-methionine-dependent formation of N(1)-methyladenine at position 9 (m1A9) in tRNA. The protein is tRNA (adenine(9)-N1)-methyltransferase of Sulfolobus acidocaldarius (strain ATCC 33909 / DSM 639 / JCM 8929 / NBRC 15157 / NCIMB 11770).